The primary structure comprises 371 residues: MSL complex subunit 3B (371 aa).

2 disordered regions span residues 1 to 44 (MATL…READ) and 160 to 229 (EERA…SPQA). Basic and acidic residues predominate over residues 8–44 (PKDDGEGKDEGGSDRGDGDPKPKGKKEVEAHTRREAD). The region spanning 44–367 (DERAVRIPIP…CEAHYSSKNP (324 aa)) is the MRG domain. Over residues 206 to 216 (APRRSTRHSTH) the composition is skewed to basic residues.

The protein localises to the nucleus. In terms of biological role, probable non-catalytic component of the MSL histone acetyltransferase complex, a multiprotein complex that mediates the majority of histone H4 acetylation at 'Lys-16' (H4K16ac), an epigenetic mark that prevents chromatin compaction. The chain is MSL complex subunit 3B from Rattus norvegicus (Rat).